The primary structure comprises 511 residues: 2-isopropylmalate synthase (511 aa).

The Pyruvate carboxyltransferase domain occupies leucine 5–leucine 267. 4 residues coordinate Mn(2+): aspartate 14, histidine 202, histidine 204, and asparagine 238. Residues lysine 393–isoleucine 511 are regulatory domain.

The protein belongs to the alpha-IPM synthase/homocitrate synthase family. LeuA type 1 subfamily. Homodimer. The cofactor is Mn(2+).

It localises to the cytoplasm. The catalysed reaction is 3-methyl-2-oxobutanoate + acetyl-CoA + H2O = (2S)-2-isopropylmalate + CoA + H(+). It participates in amino-acid biosynthesis; L-leucine biosynthesis; L-leucine from 3-methyl-2-oxobutanoate: step 1/4. Functionally, catalyzes the condensation of the acetyl group of acetyl-CoA with 3-methyl-2-oxobutanoate (2-ketoisovalerate) to form 3-carboxy-3-hydroxy-4-methylpentanoate (2-isopropylmalate). The sequence is that of 2-isopropylmalate synthase from Vesicomyosocius okutanii subsp. Calyptogena okutanii (strain HA).